The following is a 351-amino-acid chain: Photosystem II D2 protein 2 (351 aa).

A helical transmembrane segment spans residues 39-59 (CAFLSIGGWFTGTTFVTSWYT). His-116 is a binding site for chlorophyll a. The chain crosses the membrane as a helical span at residues 123–139 (GFMLRQFEIARLVNVRP). Gln-128 and Asn-141 together coordinate pheophytin a. A helical membrane pass occupies residues 151–164 (VFVSVFLMYPLGQS). His-196 contributes to the chlorophyll a binding site. A helical transmembrane segment spans residues 206–226 (GALLCAIHGATVENTLFEDTK). A plastoquinone-binding residues include His-213 and Phe-260. His-213 provides a ligand contact to Fe cation. Residue His-267 participates in Fe cation binding. The chain crosses the membrane as a helical span at residues 277–293 (GLWASAIGLVGIALNMR).

This sequence belongs to the reaction center PufL/M/PsbA/D family. As to quaternary structure, PSII is composed of 1 copy each of membrane proteins PsbA, PsbB, PsbC, PsbD, PsbE, PsbF, PsbH, PsbI, PsbJ, PsbK, PsbL, PsbM, PsbT, PsbX, PsbY, PsbZ, Psb30/Ycf12, peripheral proteins PsbO, CyanoQ (PsbQ), PsbU, PsbV and a large number of cofactors. It forms dimeric complexes. It depends on The D1/D2 heterodimer binds P680, chlorophylls that are the primary electron donor of PSII, and subsequent electron acceptors. It shares a non-heme iron and each subunit binds pheophytin, quinone, additional chlorophylls, carotenoids and lipids. There is also a Cl(-1) ion associated with D1 and D2, which is required for oxygen evolution. The PSII complex binds additional chlorophylls, carotenoids and specific lipids. as a cofactor.

It localises to the cellular thylakoid membrane. It catalyses the reaction 2 a plastoquinone + 4 hnu + 2 H2O = 2 a plastoquinol + O2. Photosystem II (PSII) is a light-driven water:plastoquinone oxidoreductase that uses light energy to abstract electrons from H(2)O, generating O(2) and a proton gradient subsequently used for ATP formation. It consists of a core antenna complex that captures photons, and an electron transfer chain that converts photonic excitation into a charge separation. The D1/D2 (PsbA/PsbD) reaction center heterodimer binds P680, the primary electron donor of PSII as well as several subsequent electron acceptors. D2 is needed for assembly of a stable PSII complex. In Acaryochloris marina (strain MBIC 11017), this protein is Photosystem II D2 protein 2.